We begin with the raw amino-acid sequence, 414 residues long: Esterase FrsA (414 aa).

The protein belongs to the FrsA family.

The enzyme catalyses a carboxylic ester + H2O = an alcohol + a carboxylate + H(+). Functionally, catalyzes the hydrolysis of esters. The polypeptide is Esterase FrsA (Escherichia coli O81 (strain ED1a)).